Consider the following 446-residue polypeptide: Ribosomal protein uS12 methylthiotransferase RimO (446 aa).

One can recognise an MTTase N-terminal domain in the interval 10–122 (KTLHMVSLGC…IDELVNEKRS (113 aa)). Residues Cys19, Cys53, Cys85, Cys154, Cys158, and Cys161 each contribute to the [4Fe-4S] cluster site. The Radical SAM core domain maps to 140–369 (TGSSYHAYVK…GEIISQTTQE (230 aa)). Residues 372-446 (ESEVGKTFEV…GDKLLATVIK (75 aa)) enclose the TRAM domain.

This sequence belongs to the methylthiotransferase family. RimO subfamily. [4Fe-4S] cluster serves as cofactor.

It localises to the cytoplasm. It carries out the reaction L-aspartate(89)-[ribosomal protein uS12]-hydrogen + (sulfur carrier)-SH + AH2 + 2 S-adenosyl-L-methionine = 3-methylsulfanyl-L-aspartate(89)-[ribosomal protein uS12]-hydrogen + (sulfur carrier)-H + 5'-deoxyadenosine + L-methionine + A + S-adenosyl-L-homocysteine + 2 H(+). Its function is as follows. Catalyzes the methylthiolation of an aspartic acid residue of ribosomal protein uS12. The protein is Ribosomal protein uS12 methylthiotransferase RimO of Aliarcobacter butzleri (strain RM4018) (Arcobacter butzleri).